The primary structure comprises 470 residues: uncharacterized protein (470 aa).

The signal sequence occupies residues 1–24 (MKKLVGSLAAISVLSATGFSYVGY).

This is an uncharacterized protein from Mycoplasma capricolum subsp. capricolum (strain California kid / ATCC 27343 / NCTC 10154).